The primary structure comprises 319 residues: Acetyl-coenzyme A carboxylase carboxyl transferase subunit alpha (319 aa).

Positions 35-296 (DLDKEIKQLE…KQRLIEQLNE (262 aa)) constitute a CoA carboxyltransferase C-terminal domain.

Belongs to the AccA family. Acetyl-CoA carboxylase is a heterohexamer composed of biotin carboxyl carrier protein (AccB), biotin carboxylase (AccC) and two subunits each of ACCase subunit alpha (AccA) and ACCase subunit beta (AccD).

The protein localises to the cytoplasm. The catalysed reaction is N(6)-carboxybiotinyl-L-lysyl-[protein] + acetyl-CoA = N(6)-biotinyl-L-lysyl-[protein] + malonyl-CoA. The protein operates within lipid metabolism; malonyl-CoA biosynthesis; malonyl-CoA from acetyl-CoA: step 1/1. Its function is as follows. Component of the acetyl coenzyme A carboxylase (ACC) complex. First, biotin carboxylase catalyzes the carboxylation of biotin on its carrier protein (BCCP) and then the CO(2) group is transferred by the carboxyltransferase to acetyl-CoA to form malonyl-CoA. This is Acetyl-coenzyme A carboxylase carboxyl transferase subunit alpha from Aliivibrio salmonicida (strain LFI1238) (Vibrio salmonicida (strain LFI1238)).